Here is a 399-residue protein sequence, read N- to C-terminus: Formate-dependent phosphoribosylglycinamide formyltransferase (399 aa).

Residues Glu-21 to Leu-22 and Glu-81 each bind N(1)-(5-phospho-beta-D-ribosyl)glycinamide. Residues Arg-114, Lys-156, Ser-161–Gln-166, Glu-196–Ile-199, and Glu-204 contribute to the ATP site. Residues Arg-119 to Leu-314 enclose the ATP-grasp domain. Residues Glu-273 and Glu-285 each coordinate Mg(2+). N(1)-(5-phospho-beta-D-ribosyl)glycinamide is bound by residues Asp-292, Lys-361, and Arg-368–Arg-369. The segment at Met-370–Thr-399 is disordered.

Belongs to the PurK/PurT family. Homodimer.

It catalyses the reaction N(1)-(5-phospho-beta-D-ribosyl)glycinamide + formate + ATP = N(2)-formyl-N(1)-(5-phospho-beta-D-ribosyl)glycinamide + ADP + phosphate + H(+). It functions in the pathway purine metabolism; IMP biosynthesis via de novo pathway; N(2)-formyl-N(1)-(5-phospho-D-ribosyl)glycinamide from N(1)-(5-phospho-D-ribosyl)glycinamide (formate route): step 1/1. Its function is as follows. Involved in the de novo purine biosynthesis. Catalyzes the transfer of formate to 5-phospho-ribosyl-glycinamide (GAR), producing 5-phospho-ribosyl-N-formylglycinamide (FGAR). Formate is provided by PurU via hydrolysis of 10-formyl-tetrahydrofolate. This Dechloromonas aromatica (strain RCB) protein is Formate-dependent phosphoribosylglycinamide formyltransferase.